The primary structure comprises 257 residues: ABC transporter ATP-binding protein YxdL (257 aa).

The ABC transporter domain occupies Leu-5–Ser-243. Gly-40 to Thr-47 is a binding site for ATP.

This sequence belongs to the ABC transporter superfamily. As to quaternary structure, the complex is composed of two ATP-binding proteins (YxdL) and two transmembrane proteins (YxdM).

Its function is as follows. Part of the ABC transporter complex YxdLM which could be involved in peptide resistance. Responsible for energy coupling to the transport system. The sequence is that of ABC transporter ATP-binding protein YxdL (yxdL) from Bacillus subtilis (strain 168).